Here is a 547-residue protein sequence, read N- to C-terminus: Chaperonin GroEL (547 aa).

Residues 30–33 (TLGP), Lys51, 87–91 (DGTTT), Gly415, and Asp495 each bind ATP. The disordered stretch occupies residues 526–547 (KKDTPVPPMPGGGMGGMGGMDF). The segment covering 536–547 (GGGMGGMGGMDF) has biased composition (gly residues).

This sequence belongs to the chaperonin (HSP60) family. In terms of assembly, forms a cylinder of 14 subunits composed of two heptameric rings stacked back-to-back. Interacts with the co-chaperonin GroES.

It is found in the cytoplasm. The enzyme catalyses ATP + H2O + a folded polypeptide = ADP + phosphate + an unfolded polypeptide.. Its function is as follows. Together with its co-chaperonin GroES, plays an essential role in assisting protein folding. The GroEL-GroES system forms a nano-cage that allows encapsulation of the non-native substrate proteins and provides a physical environment optimized to promote and accelerate protein folding. The sequence is that of Chaperonin GroEL from Bartonella henselae (strain ATCC 49882 / DSM 28221 / CCUG 30454 / Houston 1) (Rochalimaea henselae).